The sequence spans 497 residues: MTSKNILNKNNCYDAILVGAGIMSGTLALLITEILPTIKILIIEKLNKPGSESTGAFNNAGTGHAANCELNYTPVDENGDLQIDKALFINRSFENSMSLWASLYSKGKIDIKKFLKFIPHISFVTGTENISFLKKRFKAMSKYPEFADMEFSSSFNQIKSWAPLITTCRDPLDKVAATRIKRGTDINFQALTREYLTYISKNKNVEIFYNTELIDLKKTDKKQWKLKVRSLGKIVSLNTSYVFLGAGGKTINFLQKSKIPEAKIYGGFPVSGKWLICEEKSLTEKHNAKVYGKADIGSPPMSVPHLDTRWIEGKKFLLYGPFAGFTTKFLKKGSYLDLFSSIKKSNLFSMLDVGIKNNELINYLFSQSFKSHNSRVENLRNMMPSAEPSNWYLENAGQRVQIIKKTKDGGSLQFGTEIVNSGDGSLSALLGASPGASTAVSIMIEVLKKSCLFNADKFELEKKLSNLLYESEIKNESDNNFLEIIKKRNNSILGFHP.

It belongs to the MQO family. Requires FAD as cofactor.

It carries out the reaction (S)-malate + a quinone = a quinol + oxaloacetate. The protein operates within carbohydrate metabolism; tricarboxylic acid cycle; oxaloacetate from (S)-malate (quinone route): step 1/1. The sequence is that of Probable malate:quinone oxidoreductase from Prochlorococcus marinus subsp. pastoris (strain CCMP1986 / NIES-2087 / MED4).